Reading from the N-terminus, the 475-residue chain is Ribulose bisphosphate carboxylase large chain (475 aa).

A propeptide spanning residues 1–2 is cleaved from the precursor; it reads MV. Proline 3 carries the post-translational modification N-acetylproline. At lysine 14 the chain carries N6,N6,N6-trimethyllysine. 2 residues coordinate substrate: asparagine 123 and threonine 173. Lysine 175 (proton acceptor) is an active-site residue. Lysine 177 contacts substrate. Positions 201, 203, and 204 each coordinate Mg(2+). An N6-carboxylysine modification is found at lysine 201. Histidine 294 functions as the Proton acceptor in the catalytic mechanism. Substrate is bound by residues arginine 295, histidine 327, and serine 379.

The protein belongs to the RuBisCO large chain family. Type I subfamily. Heterohexadecamer of 8 large chains and 8 small chains. Requires Mg(2+) as cofactor.

The protein resides in the plastid. The protein localises to the chloroplast. It catalyses the reaction 2 (2R)-3-phosphoglycerate + 2 H(+) = D-ribulose 1,5-bisphosphate + CO2 + H2O. The catalysed reaction is D-ribulose 1,5-bisphosphate + O2 = 2-phosphoglycolate + (2R)-3-phosphoglycerate + 2 H(+). Its function is as follows. RuBisCO catalyzes two reactions: the carboxylation of D-ribulose 1,5-bisphosphate, the primary event in carbon dioxide fixation, as well as the oxidative fragmentation of the pentose substrate in the photorespiration process. Both reactions occur simultaneously and in competition at the same active site. This is Ribulose bisphosphate carboxylase large chain from Dunaliella tertiolecta (Green alga).